The following is a 220-amino-acid chain: Splicing factor U2AF 26 kDa subunit (220 aa).

Residue A2 is modified to N-acetylalanine. A C3H1-type 1 zinc finger spans residues 12-40 (EKDKVNCSFYFKIGACRHGDRCSRLHNKP). Residues 65–147 (SHCHVSDVEV…QAVHAELSPV (83 aa)) enclose the RRM domain. Residues 149–176 (DFRESCCRQYEMGECTRGGFCNFMHLRP) form a C3H1-type 2 zinc finger. Residues 186–220 (YGRGPRHRSPPRSHTGHRPRERNRRRSPDHRHGRF) form a disordered region. Over residues 189-220 (GPRHRSPPRSHTGHRPRERNRRRSPDHRHGRF) the composition is skewed to basic residues.

This sequence belongs to the splicing factor SR family. Interacts with GFI1, U2AF2 and C1QBP. Isoform 3 interacts with PER1. Isoform 3 is rapidly degraded by a proteasome-mediated degradation pathway. Ubiquitous. Highly expressed in the brain.

The protein localises to the nucleus. Its subcellular location is the nucleus speckle. It is found in the cytoplasm. RNA-binding protein that function as a pre-mRNA splicing factor. Plays a critical role in both constitutive and enhancer-dependent splicing by mediating protein-protein interactions and protein-RNA interactions required for accurate 3'-splice site selection. It can functionally substitute for U2AF1 in constitutive splicing and enhancer-dependent splicing. Acts by enhancing the binding of U2AF2 to weak pyrimidine tracts. Also participates in the regulation of alternative pre-mRNA splicing. Activates exon 5 skipping of PTPRC during T-cell activation; an event reversed by GFI1. Binds to RNA at the AG dinucleotide at the 3'-splice site. Shows a preference for AGC or AGA. Alternative splicing of U2AF1L4 may play a role in connecting the circadian rhythm to changing external cues: may provide a circadian buffering system in central and periphery clocks that allows synchronized adaption to clock-resetting stimuli in order to prevent potentially pathogenic desynchronization. This chain is Splicing factor U2AF 26 kDa subunit (U2af1l4), found in Mus musculus (Mouse).